Here is a 723-residue protein sequence, read N- to C-terminus: FACT complex subunit Ssrp1 (723 aa).

Phosphoserine is present on serine 443. 2 disordered regions span residues 459-564 and 586-723; these read EARE…AFML and AKKG…EASD. Acidic residues-rich tracts occupy residues 464–478 and 486–507; these read EEDDDDGDSDEESTD and NESDVAEEYDSNVESDSDDDSD. The span at 531–557 shows a compositional bias: basic residues; that stretch reads KKEKKHKEKERTKKPSKKKKDSGKPKR. The HMG box DNA-binding region spans 555-621; the sequence is PKRATTAFML…RYHDEMRNYK (67 aa). Positions 586 to 621 are enriched in basic and acidic residues; sequence AKKGGEMWKELKDKSKWEDAAAKDKQRYHDEMRNYK. Serine 628 carries the phosphoserine modification. Polar residues predominate over residues 644–656; sequence PSPSKKANTSGSG. 2 positions are modified to phosphoserine: serine 664 and serine 668. The span at 664-676 shows a compositional bias: acidic residues; sequence SDDDSTSSDDEKD. Phosphothreonine is present on threonine 669. Phosphoserine is present on residues serine 670 and serine 671. The segment covering 677-692 has biased composition (basic and acidic residues); that stretch reads NEPAKKKSKPPSDGDA. Acidic residues predominate over residues 702–723; that stretch reads EPEESEEDSNASDEDEEDEASD.

Belongs to the SSRP1 family. In terms of assembly, component of the FACT complex, a stable heterodimer of dre4/spt16 and Ssrp. Interacts with CHD1 and TRL/GAGA. Expressed at highest levels in nurse cells of the ovary.

It is found in the nucleus. The protein localises to the chromosome. Its subcellular location is the nucleolus. Its function is as follows. Component of the FACT complex, a general chromatin factor that acts to reorganize nucleosomes. The FACT complex is involved in multiple processes that require DNA as a template such as mRNA elongation, DNA replication and DNA repair. During transcription elongation the FACT complex acts as a histone chaperone that both destabilizes and restores nucleosomal structure. It facilitates the passage of RNA polymerase II and transcription by promoting the dissociation of one histone H2A-H2B dimer from the nucleosome, then subsequently promotes the reestablishment of the nucleosome following the passage of RNA polymerase II. Binds specifically to single-stranded DNA and RNA with highest affinity for nucleotides G and U. The FACT complex is required for expression of Hox genes. The polypeptide is FACT complex subunit Ssrp1 (Ssrp) (Drosophila melanogaster (Fruit fly)).